Consider the following 859-residue polypeptide: MRRCRWAALALGLLRLCLAQANFAPHFFDNGVGSTNGNMALFSLPEDTPVGSHVYTLNGTDPEGDPISYHISFDPSTRSVFSVDPTFGNITLVEELDREREDEIEAIISISDGLNLVAEKVVILVTDANDEAPRFIQEPYVALVPEDIPAGSIIFKVHAVDRDTGSGGSVTYFLQNLHSPFAVDRHSGVLRLQAGATLDYERSRTHYITVVAKDGGGRLHGADVVFSATTTVTVNVEDVQDMAPVFVGTPYYGYVYEDTLPGSEVLKVVAMDGDRGKPNRILYSLVNGNDGAFEINETSGAISITQSPAQLQREVYELHVQVTEMSPAGSPAAQATVPVTIRIVDLNNHPPTFYGESGPQNRFELSMNEHPPQGEILRGLKITVNDSDQGANAKFNLQLVGPRGIFRVVPQTVLNEAQVTIIVENSAAIDFEKSKVLTFKLLAVEVNTPEKFSSTADVVIQLLDTNDNVPKFDSLYYVARIPENAPGGSSVVAVTAVDPDTGPWGEVKYSTYGTGADLFLIHPSTGLIYTQPWASLDAEATARYNFYVKAEDMEGKYSVAEVFITLLDVNDHPPQFGKSVQKKTMVLGTPVKIEAIDEDAEEPNNLVDYSITHAEPANVFDINSHTGEIWLKNSIRSLDALHNITPGRDCLWSLEVQAKDRGSPSFSTTALLKIDITDAETLSRSPMAAFLIQTKDNPMKAVGVLAGTMATVVAITVLISTATFWRNKKSNKVLPMRRVLRKRPSPAPRTIRIEWLKSKSTKAATKFMLKEKPPNENCNNNSPESSLLPRAPALPPPPSVAPSTGAAQWTVPTVSGSLTPQPTQPPPKPKTMGSPVQSTLISELKQKFEKKSVHNKAYF.

A signal peptide spans 1 to 19 (MRRCRWAALALGLLRLCLA). Topologically, residues 20-700 (QANFAPHFFD…LIQTKDNPMK (681 aa)) are extracellular. 6 consecutive Cadherin domains span residues 36–135 (NGNM…APRF), 136–246 (IQEP…APVF), 247–353 (VGTP…PPTF), 359–472 (PQNR…VPKF), 473–576 (DSLY…PPQF), and 573–688 (PPQF…SPMA). N-linked (GlcNAc...) asparagine glycosylation is found at N58 and N89. The N-linked (GlcNAc...) asparagine glycan is linked to N296. A helical transmembrane segment spans residues 701 to 721 (AVGVLAGTMATVVAITVLIST). At 722–859 (ATFWRNKKSN…KKSVHNKAYF (138 aa)) the chain is on the cytoplasmic side. A disordered region spans residues 770-838 (KEKPPNENCN…PKTMGSPVQS (69 aa)). Over residues 775 to 791 (NENCNNNSPESSLLPRA) the composition is skewed to low complexity.

In terms of assembly, interacts with PROM1. Post-translationally, undergoes proteolytic cleavage; produces a soluble 95 kDa N-terminal fragment and a 25 kDa cell-associated C-terminal fragment.

The protein localises to the cell membrane. In terms of biological role, potential calcium-dependent cell-adhesion protein. May be required for the structural integrity of the outer segment (OS) of photoreceptor cells. The polypeptide is Cadherin-related family member 1 (Homo sapiens (Human)).